The chain runs to 424 residues: Enolase (424 aa).

Residue Gln-163 coordinates (2R)-2-phosphoglycerate. The active-site Proton donor is the Glu-204. Residues Asp-241, Glu-284, and Asp-311 each coordinate Mg(2+). (2R)-2-phosphoglycerate is bound by residues Lys-336, Arg-365, Ser-366, and Lys-387. Lys-336 acts as the Proton acceptor in catalysis.

Belongs to the enolase family. The cofactor is Mg(2+).

It localises to the cytoplasm. It is found in the secreted. The protein resides in the cell surface. The enzyme catalyses (2R)-2-phosphoglycerate = phosphoenolpyruvate + H2O. The protein operates within carbohydrate degradation; glycolysis; pyruvate from D-glyceraldehyde 3-phosphate: step 4/5. Functionally, catalyzes the reversible conversion of 2-phosphoglycerate (2-PG) into phosphoenolpyruvate (PEP). It is essential for the degradation of carbohydrates via glycolysis. In Dictyoglomus turgidum (strain DSM 6724 / Z-1310), this protein is Enolase.